Here is a 316-residue protein sequence, read N- to C-terminus: MLVVEVANGRSLVWGAEAVQALRERLGVGGRTVGALPRGPRQNSRLGLPLLLLPEEARLLAEIGAVTLVSAPRPDPRNHGLALASFKRQQEQSFQDQNTLAAEARETRRQELLEKIVEGQAAKKQKLEQDSGADEGGQEAGGSEATQGSETSDDGQPSAEQEGAAPSLDSSSPQPGPSNGVTPLPRSALLIQLATARPRPVKAKPLDWRVQSKDWPHAGRPAHELRYSIYRDLWERGFFLSAAGKFGGDFLVYPGDPLRFHAHYIAQCWSAEDPIPLQDLVSAGRLGTSVRKTLLLCSPQPDGKVVYTSLQWASLQ.

Positions 120–184 are disordered; it reads QAAKKQKLEQ…PGPSNGVTPL (65 aa). 2 stretches are compositionally biased toward polar residues: residues 144-159 and 168-181; these read EATQ…QPSA and LDSS…SNGV. Active-site residues include Tyr-253, His-261, and Lys-292.

This sequence belongs to the tRNA-intron endonuclease family. In terms of assembly, tRNA splicing endonuclease is a heterotetramer composed of TSEN2, TSEN15, TSEN34/LENG5 and TSEN54. tRNA splicing endonuclease complex also contains proteins of the pre-mRNA 3'-end processing machinery such as CLP1, CPSF1, CPSF4 and CSTF2.

Its subcellular location is the nucleus. The protein resides in the nucleolus. It catalyses the reaction pretRNA = a 3'-half-tRNA molecule with a 5'-OH end + a 5'-half-tRNA molecule with a 2',3'-cyclic phosphate end + an intron with a 2',3'-cyclic phosphate and a 5'-hydroxyl terminus.. Functionally, constitutes one of the two catalytic subunit of the tRNA-splicing endonuclease complex, a complex responsible for identification and cleavage of the splice sites in pre-tRNA. It cleaves pre-tRNA at the 5'- and 3'-splice sites to release the intron. The products are an intron and two tRNA half-molecules bearing 2',3'-cyclic phosphate and 5'-OH termini. There are no conserved sequences at the splice sites, but the intron is invariably located at the same site in the gene, placing the splice sites an invariant distance from the constant structural features of the tRNA body. The tRNA splicing endonuclease is also involved in mRNA processing via its association with pre-mRNA 3'-end processing factors, establishing a link between pre-tRNA splicing and pre-mRNA 3'-end formation, suggesting that the endonuclease subunits function in multiple RNA-processing events. The sequence is that of tRNA-splicing endonuclease subunit Sen34 (Tsen34) from Mus musculus (Mouse).